The primary structure comprises 88 residues: Small ribosomal subunit protein uS15 (88 aa).

It belongs to the universal ribosomal protein uS15 family. As to quaternary structure, part of the 30S ribosomal subunit. Forms a bridge to the 50S subunit in the 70S ribosome, contacting the 23S rRNA.

Functionally, one of the primary rRNA binding proteins, it binds directly to 16S rRNA where it helps nucleate assembly of the platform of the 30S subunit by binding and bridging several RNA helices of the 16S rRNA. Forms an intersubunit bridge (bridge B4) with the 23S rRNA of the 50S subunit in the ribosome. This chain is Small ribosomal subunit protein uS15, found in Psychrobacter arcticus (strain DSM 17307 / VKM B-2377 / 273-4).